The following is a 281-amino-acid chain: Elongation factor 1-delta (281 aa).

A2 is subject to N-acetylalanine. K17 is subject to N6-acetyllysine. Phosphoserine is present on residues S37, S44, S60, S86, and S106. Residues 80 to 115 (LVVRIASLEVENQSLRGVVQELQQAISKLEARLNVL) are leucine-zipper. At K107 the chain carries N6-acetyllysine. N6-acetyllysine; alternate is present on K117. K117 is subject to N6-succinyllysine; alternate. Residues 118 to 172 (SSPGHRATAPQTQHVSPMRQVEPPAKKPATPAEDDEDDDIDLFGSDNEEEDKEAA) form a disordered region. Position 119 is a phosphoserine (S119). Phosphothreonine is present on T129. S133 is modified (phosphoserine). Position 147 is a phosphothreonine (T147). Acidic residues predominate over residues 149 to 169 (AEDDEDDDIDLFGSDNEEEDK). S162 carries the phosphoserine; by CK2 modification. Positions 173–281 (QLREERLRQY…SVDIAAFNKI (109 aa)) are catalytic (GEF).

This sequence belongs to the EF-1-beta/EF-1-delta family. As to quaternary structure, EF-1 is composed of 4 subunits: alpha, beta, delta isoform 1, and gamma. Isoform 2 interacts with HSF1 and NFE2L2.

The protein localises to the nucleus. In terms of biological role, EF-1-beta and EF-1-delta stimulate the exchange of GDP bound to EF-1-alpha to GTP, regenerating EF-1-alpha for another round of transfer of aminoacyl-tRNAs to the ribosome. Its function is as follows. Regulates induction of heat-shock-responsive genes through association with heat shock transcription factors and direct DNA-binding at heat shock promoter elements (HSE). The protein is Elongation factor 1-delta (EEF1D) of Macaca fascicularis (Crab-eating macaque).